The chain runs to 352 residues: MSKQPSLSYKDAGVDIDAGEALVERIKSVAKRTKRPEVMGGLGGFGALCEIPAGYKQPVLVSGTDGVGTKLRLALNLNKHDTIGIDLVAMCVNDLVVCGAEPLFFLDYYATGKLNVDTAAQVVTGIGAGCELAGCSLVGGETAEMPGMYEGEDYDLAGFCVGVVEKAEIIDGSKVAAGDALLALPSSGPHSNGYSLIRKIIEVAGADIENIQLDGKPLTELLMAPTRIYVKPLLKLIKETGAVKAMAHITGGGLLDNIPRVLPEGAQAVVDVASWQRPAVFDWLQQQGNVEENEMHRVLNCGVGMVICVAQEHVDAALNVLREAGEQPWVIGQIATAAEGAAQVELKNLKAH.

It belongs to the AIR synthase family.

The protein localises to the cytoplasm. It carries out the reaction 2-formamido-N(1)-(5-O-phospho-beta-D-ribosyl)acetamidine + ATP = 5-amino-1-(5-phospho-beta-D-ribosyl)imidazole + ADP + phosphate + H(+). Its pathway is purine metabolism; IMP biosynthesis via de novo pathway; 5-amino-1-(5-phospho-D-ribosyl)imidazole from N(2)-formyl-N(1)-(5-phospho-D-ribosyl)glycinamide: step 2/2. The chain is Phosphoribosylformylglycinamidine cyclo-ligase from Pseudomonas syringae pv. tomato (strain ATCC BAA-871 / DC3000).